Here is a 304-residue protein sequence, read N- to C-terminus: tRNA dimethylallyltransferase (304 aa).

2 to 9 (GPTASGKT) lines the ATP pocket. 4–9 (TASGKT) contacts substrate. 4 interaction with substrate tRNA regions span residues 27–30 (DSAL), 151–155 (QRINR), 232–237 (RCVGYR), and 265–272 (KRQITWLR).

It belongs to the IPP transferase family. As to quaternary structure, monomer. Mg(2+) serves as cofactor.

The enzyme catalyses adenosine(37) in tRNA + dimethylallyl diphosphate = N(6)-dimethylallyladenosine(37) in tRNA + diphosphate. In terms of biological role, catalyzes the transfer of a dimethylallyl group onto the adenine at position 37 in tRNAs that read codons beginning with uridine, leading to the formation of N6-(dimethylallyl)adenosine (i(6)A). This is tRNA dimethylallyltransferase from Actinobacillus pleuropneumoniae serotype 7 (strain AP76).